Reading from the N-terminus, the 144-residue chain is 3-dehydroquinate dehydratase (144 aa).

The active-site Proton acceptor is Tyr22. Positions 71, 77, and 84 each coordinate substrate. His97 (proton donor) is an active-site residue. Substrate-binding positions include 98-99 and Arg108; that span reads IS.

This sequence belongs to the type-II 3-dehydroquinase family. As to quaternary structure, homododecamer.

The enzyme catalyses 3-dehydroquinate = 3-dehydroshikimate + H2O. It participates in metabolic intermediate biosynthesis; chorismate biosynthesis; chorismate from D-erythrose 4-phosphate and phosphoenolpyruvate: step 3/7. In terms of biological role, catalyzes a trans-dehydration via an enolate intermediate. The protein is 3-dehydroquinate dehydratase (aroQ) of Thermotoga maritima (strain ATCC 43589 / DSM 3109 / JCM 10099 / NBRC 100826 / MSB8).